A 352-amino-acid polypeptide reads, in one-letter code: DNA integrity scanning protein DisA (352 aa).

One can recognise a DAC domain in the interval 3–143 (PQELIEKIKL…NYKYVVNQVD (141 aa)). Residues Gly-71, Leu-89, and 102 to 106 (TRHRT) contribute to the ATP site.

This sequence belongs to the DisA family. In terms of assembly, homooctamer. The cofactor is Mg(2+).

The catalysed reaction is 2 ATP = 3',3'-c-di-AMP + 2 diphosphate. Its function is as follows. Participates in a DNA-damage check-point. DisA forms globular foci that rapidly scan along the chromosomes searching for lesions. Functionally, also has diadenylate cyclase activity, catalyzing the condensation of 2 ATP molecules into cyclic di-AMP (c-di-AMP). c-di-AMP likely acts as a signaling molecule that may couple DNA integrity with a cellular process. The sequence is that of DNA integrity scanning protein DisA from Thermotoga petrophila (strain ATCC BAA-488 / DSM 13995 / JCM 10881 / RKU-1).